A 426-amino-acid chain; its full sequence is MRSQGNMSDRLGVEVDCHSLGSNECPSMGSSFSPLESPTPTPTSIYSQGSLASPSWPENGSYPGHAYDRGTGSTPIRGHFRLASMPSHENMGLPPYSSLDGQDRMAVTDFLPSYDENADQFWLPSDVPKTYDHHVHGLPCPPSMHQYPPMLRSNYRHHPAPYFPESATNPCLSRPIFHHQPERLPPSLSMSHMMPWMGHTESIAPETIAPSQVAPVTPPPSYTDFSNSINTFKTHSPDTPIRSCSLGTVSGADTPLSRLSGGAGEYMDECHQSPIYRDASGVRLQRQPSRKMARKQPSKQSLSLENLPSIIKQVQFKCKEPGCKGRFKRQEHLKRHMKSHSKEKPHVCWVPGCHRAFSRSDNLNAHYTKTHSKRGGRNRYVATLDETSPDYNPDYRGPLTADGRPMPGGTLDESMPSREISMEWDE.

Disordered stretches follow at residues 25–71 (CPSM…DRGT) and 281–302 (GVRL…KQSL). Residues 30 to 44 (SSFSPLESPTPTPTS) show a composition bias toward low complexity. The span at 45–58 (IYSQGSLASPSWPE) shows a compositional bias: polar residues. A compositionally biased stretch (basic residues) spans 288 to 297 (PSRKMARKQP). 2 consecutive C2H2-type zinc fingers follow at residues 316 to 340 (FKCK…MKSH) and 346 to 371 (HVCW…TKTH). Residues 384 to 426 (LDETSPDYNPDYRGPLTADGRPMPGGTLDESMPSREISMEWDE) are disordered.

It is found in the nucleus. Functionally, brlA, abaA and wetA are pivotal regulators of conidiophore development and conidium maturation. They act individually and together to regulate their own expression and that of numerous other sporulation-specific genes. Binds promoters of target genes at brlA response elements (BREs) containing the conserved sequence 5'-(C/A)(A/G)AGGG(G/A)-3'. Positively regulates expression of the gliotoxin biosynthetic gene cluster in actively growing vegetative cells, and likely bridges morphological and chemical development during the life-cycle. Regulates (directly or indirectly) the ergot cluster genes. Positively regulates expression of the fumiquinazoline C biosynthetic gene cluster. Positively regulates expression of the melanin biosynthetic gene cluster. Mediates repression of ribosomal protein gene expression in response to nitrogen depletion. The chain is C2H2 type master regulator of conidiophore development brlA from Aspergillus fumigatus (strain ATCC MYA-4609 / CBS 101355 / FGSC A1100 / Af293) (Neosartorya fumigata).